Here is a 301-residue protein sequence, read N- to C-terminus: Phosphonates import ATP-binding protein PhnC (301 aa).

The region spanning 8 to 256 (IRIERLSKTF…LLKTLYGDEA (249 aa)) is the ABC transporter domain. 41–48 (GASGSGKS) contributes to the ATP binding site. The disordered stretch occupies residues 264–287 (AQGPDDTESKNTADNTPLQDAAPA).

It belongs to the ABC transporter superfamily. Phosphonates importer (TC 3.A.1.9.1) family. As to quaternary structure, the complex is composed of two ATP-binding proteins (PhnC), two transmembrane proteins (PhnE) and a solute-binding protein (PhnD).

The protein resides in the cell inner membrane. It carries out the reaction phosphonate(out) + ATP + H2O = phosphonate(in) + ADP + phosphate + H(+). Part of the ABC transporter complex PhnCDE involved in phosphonates import. Responsible for energy coupling to the transport system. This Paraburkholderia xenovorans (strain LB400) protein is Phosphonates import ATP-binding protein PhnC.